The primary structure comprises 487 residues: Serralysin (487 aa).

The propeptide occupies 1 to 16; sequence MQSTKKAIEITESSLA. Histidine 192 contacts Zn(2+). Residue glutamate 193 is part of the active site. 3 residues coordinate Zn(2+): histidine 196, histidine 202, and tyrosine 232. Arginine 269, glycine 271, threonine 273, aspartate 301, glycine 303, glycine 304, aspartate 306, threonine 343, glutamate 345, glycine 350, glycine 352, aspartate 354, asparagine 359, alanine 361, asparagine 363, glycine 367, glycine 368, alanine 369, glycine 370, aspartate 372, glycine 376, glycine 377, glycine 378, glycine 379, aspartate 381, glycine 385, glycine 386, alanine 387, glycine 388, aspartate 390, aspartate 399, aspartate 406, and aspartate 416 together coordinate Ca(2+). 2 Hemolysin-type calcium-binding repeats span residues 348-365 and 366-383; these read IGGS…NNVL and KGGA…ADEL.

Belongs to the peptidase M10B family. The cofactor is Ca(2+). Requires Zn(2+) as cofactor.

Its subcellular location is the secreted. The catalysed reaction is Preferential cleavage of bonds with hydrophobic residues in P1'.. In terms of biological role, has insecticidal activity against the locust M.palpalis. When administered orally to locusts at a low dose it causes them to lie on their sides exhibiting sporadic limb movements and muscular twitching, followed by full recovery. When administered at higher doses the same symptoms are observed, followed by death. This is Serralysin from Serratia marcescens.